The chain runs to 280 residues: MRAYLDLLQHILDNGGDKGDRTGTGTRSVFGHQMRFDLSKGFPLLTTKKVHFRSIVIELLWFLKGDTNVKYLQDNKVTIWDEWATAEQTARFGRPEHELGPVYGHQWRNFGATKNADGTYNQDGFDQIKWLINEIKTNPNSRRLIVSGWNPNEAGQVALPPCHTLFQFFVQDNKLSCQLYQRSADVFLGVPFNIASYALLTHMIAQVCGLGVGDFVWTGGDTHLYANHFEQAKLQLTREPLPLCQLKLNPEVKDIFDFKFEDIEIVGYESHPAIKAPVAV.

Arginine 21 is a binding site for dUMP. Histidine 51 lines the (6R)-5,10-methylene-5,6,7,8-tetrahydrofolate pocket. 142–143 (RR) contacts dUMP. The active-site Nucleophile is the cysteine 162. DUMP is bound by residues 182–185 (RSAD), asparagine 193, and 223–225 (HLY). Residue aspartate 185 participates in (6R)-5,10-methylene-5,6,7,8-tetrahydrofolate binding. (6R)-5,10-methylene-5,6,7,8-tetrahydrofolate is bound at residue alanine 279.

Belongs to the thymidylate synthase family. Bacterial-type ThyA subfamily. Homodimer.

It localises to the cytoplasm. The enzyme catalyses dUMP + (6R)-5,10-methylene-5,6,7,8-tetrahydrofolate = 7,8-dihydrofolate + dTMP. It functions in the pathway pyrimidine metabolism; dTTP biosynthesis. Functionally, catalyzes the reductive methylation of 2'-deoxyuridine-5'-monophosphate (dUMP) to 2'-deoxythymidine-5'-monophosphate (dTMP) while utilizing 5,10-methylenetetrahydrofolate (mTHF) as the methyl donor and reductant in the reaction, yielding dihydrofolate (DHF) as a by-product. This enzymatic reaction provides an intracellular de novo source of dTMP, an essential precursor for DNA biosynthesis. In Acinetobacter baumannii (strain AB307-0294), this protein is Thymidylate synthase.